The sequence spans 69 residues: Large ribosomal subunit protein eL38z/eL38y (69 aa).

This sequence belongs to the eukaryotic ribosomal protein eL38 family.

The protein is Large ribosomal subunit protein eL38z/eL38y (RPL38A) of Arabidopsis thaliana (Mouse-ear cress).